The sequence spans 1037 residues: Receptor kinase-like protein Xa21 (1037 aa).

A signal peptide spans 1 to 24 (MARSPTSVMISSLLLLLLIGPASS). Over 25-665 (DDAAAAAAAR…LLENRKHFPV (641 aa)) the chain is Extracellular. 3 N-linked (GlcNAc...) asparagine glycosylation sites follow: N66, N101, and N112. LRR repeat units follow at residues 89–112 (PHRV…SLGN), 113–137 (LSFL…LSRL), 138–161 (SRLQ…IGAC), 163–185 (KLTS…IGAS), 187–210 (KHLS…LGNL), 211–234 (TSLQ…LGQL), 236–259 (SSLL…IWNL), 260–283 (SSLR…AFKT), 285–308 (HLLE…VANA), 310–331 (HLTQ…GFGR), and 333–355 (RNLT…DWGF). N209 carries N-linked (GlcNAc...) asparagine glycosylation. N247 and N258 each carry an N-linked (GlcNAc...) asparagine glycan. Residue N307 is glycosylated (N-linked (GlcNAc...) asparagine). Residues N334, N361, and N385 are each glycosylated (N-linked (GlcNAc...) asparagine). LRR repeat units lie at residues 362-385 (CSKL…SFSN), 387-411 (STSL…IGNL), 412-435 (IGLQ…LGRL), 437-459 (NLGI…IGNL), 460-482 (TELN…TLSN), 483-507 (LTNL…LFNI), 509-532 (TLSI…IGHL), 533-556 (KNLV…LGDC), 557-580 (QLLR…LGQL), 581-604 (KGLE…LADI), and 606-629 (MLHS…AFAD). 5 N-linked (GlcNAc...) asparagine glycosylation sites follow: N447, N458, N482, N495, and N515. Residues N592 and N611 are each glycosylated (N-linked (GlcNAc...) asparagine). Residues 666-686 (LPISVSLVAALAILSSLYLLI) traverse the membrane as a helical segment. At 687–1037 (TWHKRTKKGA…PVCEGASLEF (351 aa)) the chain is on the cytoplasmic side. The Nuclear localization signal signature appears at 689–694 (HKRTKK). S698 is modified (phosphoserine). Phosphothreonine is present on T700. Position 701 is a phosphoserine (S701). At T717 the chain carries Phosphothreonine. In terms of domain architecture, Protein kinase spans 720–1019 (FAPTNLLGSG…GDIIDELNAI (300 aa)). ATP-binding positions include 726-734 (LGSGSFGSV) and K748. D854 acts as the Proton acceptor in catalysis.

This sequence belongs to the protein kinase superfamily. Ser/Thr protein kinase family. As to quaternary structure, interacts with WRKY62/XB10 in the nucleus. Interacts with SERK2. Mn(2+) serves as cofactor. Requires Mg(2+) as cofactor. In terms of processing, undergoes protein cleavage upon X.oryzae pv. oryzae protein Ax21 detection, thus releasing the processed protein kinase Xa21 chain. Post-translationally, autophosphorylated on serine and threonine residues; these phosphorylation prevents proteolytic degradation.

It localises to the cell membrane. The protein resides in the endoplasmic reticulum membrane. It is found in the nucleus. The enzyme catalyses L-seryl-[protein] + ATP = O-phospho-L-seryl-[protein] + ADP + H(+). It catalyses the reaction L-threonyl-[protein] + ATP = O-phospho-L-threonyl-[protein] + ADP + H(+). Its function is as follows. Receptor kinase that detects X.oryzae pv. oryzae protein Ax21 to promote innate immunity. Following X.oryzae pv. oryzae protein Ax21 detection, undergoes cleavage, releasing the processed protein kinase Xa21 chain. Functionally, the processed protein kinase Xa21 chain released by protein cleavage after X.oryzae pv. oryzae protein Ax21 detection translocates into the nucleus where it can bind and regulate WRKY62, a transcription factor. Confers resistance to the bacterial pathogen X.oryzae pv. oryzae (Xoo). This Oryza sativa subsp. japonica (Rice) protein is Receptor kinase-like protein Xa21.